Consider the following 835-residue polypeptide: Leucine--tRNA ligase (835 aa).

The 'HIGH' region motif lies at 36-46 (PYPSGKIHVGH). The short motif at 602–606 (KMSKS) is the 'KMSKS' region element. K605 contributes to the ATP binding site.

The protein belongs to the class-I aminoacyl-tRNA synthetase family.

The protein resides in the cytoplasm. It catalyses the reaction tRNA(Leu) + L-leucine + ATP = L-leucyl-tRNA(Leu) + AMP + diphosphate. This is Leucine--tRNA ligase from Rickettsia massiliae (strain Mtu5).